The primary structure comprises 694 residues: Elongation factor G 1 (694 aa).

One can recognise a tr-type G domain in the interval 5–280; that stretch reads SRYRNIGIFA…AVVDYLPDPT (276 aa). Residues 14–21, 78–82, and 132–135 each bind GTP; these read AHVDAGKT, DTPGH, and NKLD.

This sequence belongs to the TRAFAC class translation factor GTPase superfamily. Classic translation factor GTPase family. EF-G/EF-2 subfamily.

The protein resides in the cytoplasm. Functionally, catalyzes the GTP-dependent ribosomal translocation step during translation elongation. During this step, the ribosome changes from the pre-translocational (PRE) to the post-translocational (POST) state as the newly formed A-site-bound peptidyl-tRNA and P-site-bound deacylated tRNA move to the P and E sites, respectively. Catalyzes the coordinated movement of the two tRNA molecules, the mRNA and conformational changes in the ribosome. This is Elongation factor G 1 from Methylococcus capsulatus (strain ATCC 33009 / NCIMB 11132 / Bath).